The chain runs to 79 residues: Large ribosomal subunit protein uL24 (79 aa).

This sequence belongs to the universal ribosomal protein uL24 family. As to quaternary structure, part of the 50S ribosomal subunit.

One of two assembly initiator proteins, it binds directly to the 5'-end of the 23S rRNA, where it nucleates assembly of the 50S subunit. Its function is as follows. One of the proteins that surrounds the polypeptide exit tunnel on the outside of the subunit. The sequence is that of Large ribosomal subunit protein uL24 from Lactobacillus delbrueckii subsp. bulgaricus (strain ATCC 11842 / DSM 20081 / BCRC 10696 / JCM 1002 / NBRC 13953 / NCIMB 11778 / NCTC 12712 / WDCM 00102 / Lb 14).